A 215-amino-acid polypeptide reads, in one-letter code: Probable transaldolase 1 (215 aa).

K83 serves as the catalytic Schiff-base intermediate with substrate.

It belongs to the transaldolase family. Type 3B subfamily.

The protein localises to the cytoplasm. It catalyses the reaction D-sedoheptulose 7-phosphate + D-glyceraldehyde 3-phosphate = D-erythrose 4-phosphate + beta-D-fructose 6-phosphate. It functions in the pathway carbohydrate degradation; pentose phosphate pathway; D-glyceraldehyde 3-phosphate and beta-D-fructose 6-phosphate from D-ribose 5-phosphate and D-xylulose 5-phosphate (non-oxidative stage): step 2/3. Its function is as follows. Transaldolase is important for the balance of metabolites in the pentose-phosphate pathway. The polypeptide is Probable transaldolase 1 (Bacillus cereus (strain ATCC 14579 / DSM 31 / CCUG 7414 / JCM 2152 / NBRC 15305 / NCIMB 9373 / NCTC 2599 / NRRL B-3711)).